Consider the following 869-residue polypeptide: Ubiquitin carboxyl-terminal hydrolase 29 (869 aa).

2 stretches are compositionally biased toward polar residues: residues 104–120 and 140–150; these read SSTP…MSSQ and SLNTTPESGTP. The disordered stretch occupies residues 104 to 226; that stretch reads SSTPCESQQP…KAVTLREQEK (123 aa). Positions 187–200 are enriched in basic and acidic residues; the sequence is VNKDIPKENTPDQK. The span at 201–212 shows a compositional bias: basic residues; the sequence is KKSRRYYSRNRG. Basic and acidic residues predominate over residues 213 to 226; that stretch reads GKAEKAVTLREQEK. The USP domain occupies 289–826; sequence EGFPNLGNTC…SGYIFFYMHN (538 aa). The active-site Nucleophile is cysteine 298. The interval 723–754 is disordered; the sequence is SQEDPEKDLSRSPELQEDDPHSFAFGSDDSKD. The Proton acceptor role is filled by histidine 781.

This sequence belongs to the peptidase C19 family. As to expression, predominantly expressed in brain and testis. Highest expression levels in adult brain, especially in the cerebral cortex and hippocampus, and in the forebrain, face, and limb buds of midgestation mouse embryos.

It is found in the cytoplasm. It localises to the perinuclear region. It catalyses the reaction Thiol-dependent hydrolysis of ester, thioester, amide, peptide and isopeptide bonds formed by the C-terminal Gly of ubiquitin (a 76-residue protein attached to proteins as an intracellular targeting signal).. In terms of biological role, deubiquitinase involved in innate antiviral immunity by mediating 'Lys-48'-linked deubiquitination of CGAS, thereby promoting its stabilization. The protein is Ubiquitin carboxyl-terminal hydrolase 29 of Mus musculus (Mouse).